Reading from the N-terminus, the 137-residue chain is Large ribosomal subunit protein bL12 (137 aa).

The protein belongs to the bacterial ribosomal protein bL12 family. In terms of assembly, homodimer. Part of the ribosomal stalk of the 50S ribosomal subunit. Forms a multimeric L10(L12)X complex, where L10 forms an elongated spine to which 2 to 4 L12 dimers bind in a sequential fashion. Binds GTP-bound translation factors.

In terms of biological role, forms part of the ribosomal stalk which helps the ribosome interact with GTP-bound translation factors. Is thus essential for accurate translation. This is Large ribosomal subunit protein bL12 from Gloeobacter violaceus (strain ATCC 29082 / PCC 7421).